A 122-amino-acid chain; its full sequence is Large ribosomal subunit protein uL14 (122 aa).

This sequence belongs to the universal ribosomal protein uL14 family. Part of the 50S ribosomal subunit. Forms a cluster with proteins L3 and L19. In the 70S ribosome, L14 and L19 interact and together make contacts with the 16S rRNA in bridges B5 and B8.

In terms of biological role, binds to 23S rRNA. Forms part of two intersubunit bridges in the 70S ribosome. The protein is Large ribosomal subunit protein uL14 of Moorella thermoacetica (strain ATCC 39073 / JCM 9320).